Reading from the N-terminus, the 419-residue chain is Voltage-gated potassium channel subunit beta-1 (419 aa).

Residues 1 to 51 (MLAARTGAAGSQIAEESSKLRKQAAFSGGSKDRSPKKASENVKDSSLSPSG) form a disordered region. Residues 30-43 (SKDRSPKKASENVK) are compositionally biased toward basic and acidic residues. Residues T108, W109, Q115, and D137 each coordinate NADP(+). The Proton donor/acceptor role is filled by Y142. NADP(+) is bound by residues N210, S240, R241, Q266, W295, S296, P297, L298, A299, C300, K306, R316, G375, S377, Q381, E384, and N385.

The protein belongs to the shaker potassium channel beta subunit family. Homotetramer. Interaction with tetrameric potassium channel alpha subunits gives rise to a heterooctamer. Identified in potassium channel complexes containing KCNA1, KCNA2, KCNA4, KCNA5, KCNA6, KCNAB1 and KCNAB2. Part of a complex containing KCNA1, KCNA4 and LGI1; interaction with LGI1 inhibits down-regulation of KCNA1 channel activity. Interacts with the dimer formed by GNB1 and GNG2; this enhances KCNA1 binding. Interacts with SQSTM1. As to expression, detected in portal vein myocytes (at protein level).

The protein resides in the cytoplasm. It is found in the membrane. Its subcellular location is the cell membrane. It catalyses the reaction a primary alcohol + NADP(+) = an aldehyde + NADPH + H(+). The enzyme catalyses a secondary alcohol + NADP(+) = a ketone + NADPH + H(+). Functionally, regulatory subunit of the voltage-gated potassium (Kv) channels composed of pore-forming and potassium-conducting alpha subunits and of regulatory beta subunits. The beta-1/KCNAB1 cytoplasmic subunit mediates closure of delayed rectifier potassium channels by physically obstructing the pore via its N-terminal domain and increases the speed of channel closure for other family members. Promotes the inactivation of KCNA1, KCNA2, KCNA4, KCNA5 and KCNA6 alpha subunit-containing channels. Displays nicotinamide adenine dinucleotide phosphate (NADPH)-dependent aldoketoreductase activity by catalyzing the NADPH-dependent reduction of a variety of endogenous aldehydes and ketones. The binding of NADPH is required for efficient down-regulation of potassium channel activity. Oxidation of the bound NADPH restrains N-terminal domain from blocking the channel, thereby decreasing N-type inactivation of potassium channel activity. The protein is Voltage-gated potassium channel subunit beta-1 (KCNAB1) of Oryctolagus cuniculus (Rabbit).